The chain runs to 150 residues: Alkaline nuclease (150 aa).

This sequence belongs to the baculo-herpesviridae alkaline nuclease family.

This is Alkaline nuclease (UL12) from Suid herpesvirus 1 (strain NIA-3) (SuHV-1).